We begin with the raw amino-acid sequence, 245 residues long: Octanoyltransferase (245 aa).

In terms of domain architecture, BPL/LPL catalytic spans 54–242 (QNAHEQVWLL…SFEQIFGPII (189 aa)). Substrate contacts are provided by residues 93 to 100 (RGGEFTYH), 173 to 175 (AIG), and 186 to 188 (GVS). Cys204 serves as the catalytic Acyl-thioester intermediate.

It belongs to the LipB family.

Its subcellular location is the cytoplasm. The catalysed reaction is octanoyl-[ACP] + L-lysyl-[protein] = N(6)-octanoyl-L-lysyl-[protein] + holo-[ACP] + H(+). It participates in protein modification; protein lipoylation via endogenous pathway; protein N(6)-(lipoyl)lysine from octanoyl-[acyl-carrier-protein]: step 1/2. Functionally, catalyzes the transfer of endogenously produced octanoic acid from octanoyl-acyl-carrier-protein onto the lipoyl domains of lipoate-dependent enzymes. Lipoyl-ACP can also act as a substrate although octanoyl-ACP is likely to be the physiological substrate. This chain is Octanoyltransferase, found in Bartonella henselae (strain ATCC 49882 / DSM 28221 / CCUG 30454 / Houston 1) (Rochalimaea henselae).